The primary structure comprises 485 residues: Regulatory protein ViaA (485 aa).

The protein belongs to the ViaA family. As to quaternary structure, homodimer. Interacts with RavA.

It localises to the cytoplasm. Its function is as follows. Component of the RavA-ViaA chaperone complex, which may act on the membrane to optimize the function of some of the respiratory chains. ViaA stimulates the ATPase activity of RavA. The polypeptide is Regulatory protein ViaA (Proteus mirabilis (strain HI4320)).